A 1021-amino-acid polypeptide reads, in one-letter code: Sodium/potassium-transporting ATPase subunit alpha-1 (1021 aa).

The propeptide occupies 1 to 5 (MGKGA). Residues 1-11 (MGKGAGRDKYE) are compositionally biased toward basic and acidic residues. Residues 1–31 (MGKGAGRDKYEPTATSEHGTKKKKAKERDMD) form a disordered region. Residues 6–85 (GRDKYEPTAT…NTLTPPPTTP (80 aa)) are Cytoplasmic-facing. Residue Tyr-10 is modified to Phosphotyrosine. At Ser-16 the chain carries Phosphoserine; by PKC. The tract at residues 80–82 (PPP) is phosphoinositide-3 kinase binding. Residues 86 to 106 (EWVKFCRQLFGGFSLLLWIGS) traverse the membrane as a helical segment. Residues 107–129 (LLCFLAYGITSVMEGEPNSDNLY) lie on the Extracellular side of the membrane. A helical membrane pass occupies residues 130–150 (LGVVLAAVVIITGCFSYYQEA). At 151 to 286 (KSSKIMESFK…GGKTPIAMEI (136 aa)) the chain is on the cytoplasmic side. The disordered stretch occupies residues 214-233 (SSLTGESEPQTRSPDFSNEN). The helical transmembrane segment at 287 to 306 (EHFIHLITGVAVFLGVSFFI) threads the bilayer. Residues 307-318 (LSLILEYTWLEA) lie on the Extracellular side of the membrane. Residues 319–336 (VIFLIGIIVANVPEGLLA) traverse the membrane as a helical segment. The Cytoplasmic portion of the chain corresponds to 337–770 (TVTVCLTLTA…EEGRLIFDNL (434 aa)). The 4-aspartylphosphate intermediate role is filled by Asp-374. Lys-485 contacts ATP. The Mg(2+) site is built by Asp-715 and Asp-719. Residues 771–790 (KKSIAYTLTSNIPEITPFLI) form a helical membrane-spanning segment. At 791 to 800 (FIIANIPLPL) the chain is on the extracellular side. The helical transmembrane segment at 801–821 (GTCTILCIDLGTDMVPAISLA) threads the bilayer. The Cytoplasmic segment spans residues 822 to 841 (YEQAESDIMKRQPRNPKTDK). A helical transmembrane segment spans residues 842–864 (LVNERLISMAYGQIGMIQALGGF). Residues 865 to 916 (FTYFVIMAENGFLPSGLVGIRLQWDDRWINDVEDSYGQQWTFEQRKIVEFTC) are Extracellular-facing. Residues 917–936 (HTAFFVSIVVVQWADLIICK) traverse the membrane as a helical segment. At 937–949 (TRRNSVFQQGMKN) the chain is on the cytoplasmic side. A Phosphoserine; by PKA modification is found at Ser-941. A helical membrane pass occupies residues 950 to 968 (KILIFGLFEETALAAFLSY). Over 969–983 (CPGMDVALRMYPLKP) the chain is Extracellular. Residues 984 to 1004 (TWWFCAFPYSLLIFLYDEIRK) traverse the membrane as a helical segment. Residues 1005 to 1021 (LIIRRNPGGWVERETYY) are Cytoplasmic-facing.

This sequence belongs to the cation transport ATPase (P-type) (TC 3.A.3) family. Type IIC subfamily. In terms of assembly, the sodium/potassium-transporting ATPase is composed of a catalytic alpha subunit, an auxiliary non-catalytic beta subunit and an additional regulatory subunit. In terms of processing, phosphorylation on Tyr-10 modulates pumping activity.

It is found in the cell membrane. It localises to the sarcolemma. The catalysed reaction is K(+)(out) + Na(+)(in) + ATP + H2O = K(+)(in) + Na(+)(out) + ADP + phosphate + H(+). Its function is as follows. This is the catalytic component of the active enzyme, which catalyzes the hydrolysis of ATP coupled with the exchange of sodium and potassium ions across the plasma membrane. This action creates the electrochemical gradient of sodium and potassium ions, providing the energy for active transport of various nutrients. This is Sodium/potassium-transporting ATPase subunit alpha-1 (ATP1A1) from Gallus gallus (Chicken).